Reading from the N-terminus, the 353-residue chain is Alanine racemase (353 aa).

Lys33 serves as the catalytic Proton acceptor; specific for D-alanine. Position 33 is an N6-(pyridoxal phosphate)lysine (Lys33). Arg129 contacts substrate. Residue Tyr250 is the Proton acceptor; specific for L-alanine of the active site. Met298 contributes to the substrate binding site.

It belongs to the alanine racemase family. Requires pyridoxal 5'-phosphate as cofactor.

It catalyses the reaction L-alanine = D-alanine. It functions in the pathway amino-acid biosynthesis; D-alanine biosynthesis; D-alanine from L-alanine: step 1/1. Catalyzes the interconversion of L-alanine and D-alanine. May also act on other amino acids. In Azoarcus sp. (strain BH72), this protein is Alanine racemase (alr).